The sequence spans 345 residues: NADH-ubiquinone oxidoreductase chain 2 (345 aa).

9 helical membrane passes run 1-21 (MNPI…ILAM), 25-45 (HWVY…PIIS), 60-80 (FLIQ…NAYL), 113-133 (FWLP…IATW), 148-168 (LIPT…GGLG), 191-211 (VIII…YMIF), 239-259 (IITS…PMSG), 274-294 (HLTP…MFYL), and 324-344 (SSLS…PLLI).

The protein belongs to the complex I subunit 2 family.

It localises to the mitochondrion inner membrane. The enzyme catalyses a ubiquinone + NADH + 5 H(+)(in) = a ubiquinol + NAD(+) + 4 H(+)(out). Functionally, core subunit of the mitochondrial membrane respiratory chain NADH dehydrogenase (Complex I) that is believed to belong to the minimal assembly required for catalysis. Complex I functions in the transfer of electrons from NADH to the respiratory chain. The immediate electron acceptor for the enzyme is believed to be ubiquinone. In Varanus baritji (Black-spotted ridge-tailed monitor), this protein is NADH-ubiquinone oxidoreductase chain 2 (MT-ND2).